Consider the following 328-residue polypeptide: Pleckstrin homology domain protein OPY1 (328 aa).

A disordered region spans residues 19–52 (NLIKKPSTSQNKTPTAQSSSGNNGAADGAPQGYH). The span at 24–41 (PSTSQNKTPTAQSSSGNN) shows a compositional bias: polar residues. The tract at residues 213 to 328 (AEHQVCSGIL…IRKKLKAENI (116 aa)) is required for targeting to the cell membrane. Residues 215–318 (HQVCSGILYT…WIINFKSGIL (104 aa)) form the PH domain.

As to quaternary structure, interacts with MSS4 (via N-terminus); to negatively regulate MSS4 kinase activity.

It localises to the cell membrane. The protein resides in the cytoplasm. Its function is as follows. Binds phosphatidylinositol 4,5-bisphosphate (PtdIns(4,5)P2/PIP2) at the cell membrane. Negatively regulates the activity of phosphatidylinositol 4-phosphate 5-kinase MSS4. This Saccharomyces cerevisiae (strain ATCC 204508 / S288c) (Baker's yeast) protein is Pleckstrin homology domain protein OPY1 (OPY1).